We begin with the raw amino-acid sequence, 290 residues long: MVIQKEKKSCGQVVEEWKEFVWNPRTHQFMGRTGTSWAFILLFYLVFYGFLTAMFTLTMWVMLQTVSDHTPKYQDRLATPGLMIRPKTENLDVIVNVSDTESWDQHVQKLNKFLEPYNDSIQAQKNDVCRPGRYYEQPDNGVLNYPKRACQFNRTQLGNCSGIGDSTHYGYSTGQPCVFIKMNRVINFYAGANQSMNVTCAGKRDEDAENLGNFVMFPANGNIDLMYFPYYGKKFHVNYTQPLVAVKFLNVTPNVEVNVECRINAANIATDDERDKFAGRVAFKLRINKT.

Residues 1-39 (MVIQKEKKSCGQVVEEWKEFVWNPRTHQFMGRTGTSWAF) lie on the Cytoplasmic side of the membrane. The helical; Signal-anchor for type II membrane protein transmembrane segment at 40–67 (ILLFYLVFYGFLTAMFTLTMWVMLQTVS) threads the bilayer. Residues 68-290 (DHTPKYQDRL…VAFKLRINKT (223 aa)) lie on the Extracellular side of the membrane. N96 and N118 each carry an N-linked (GlcNAc...) asparagine glycan. An intrachain disulfide couples C129 to C150. 2 N-linked (GlcNAc...) asparagine glycosylation sites follow: N153 and N159. C160 and C177 are disulfide-bonded. 3 N-linked (GlcNAc...) asparagine glycosylation sites follow: N193, N197, and N238. Residues 193-290 (NQSMNVTCAG…VAFKLRINKT (98 aa)) are immunoglobulin-like. C200 and C261 are joined by a disulfide.

This sequence belongs to the X(+)/potassium ATPases subunit beta family. The sodium/potassium-transporting ATPase is composed of a catalytic alpha subunit, an auxiliary non-catalytic beta subunit and an additional regulatory subunit. Interacts with isoform 2 of BSG.

It localises to the cell membrane. In terms of biological role, this is the non-catalytic component of the active enzyme, which catalyzes the hydrolysis of ATP coupled with the exchange of Na(+) and K(+) ions across the plasma membrane. The exact function of the beta-2 subunit is not known. Its function is as follows. Mediates cell adhesion of neurons and astrocytes, and promotes neurite outgrowth. This is Sodium/potassium-transporting ATPase subunit beta-2 (ATP1B2) from Homo sapiens (Human).